The primary structure comprises 265 residues: Hydroxyethylthiazole kinase 2 (265 aa).

Position 39 (M39) interacts with substrate. 2 residues coordinate ATP: K115 and T168. Residue G195 participates in substrate binding.

This sequence belongs to the Thz kinase family. It depends on Mg(2+) as a cofactor.

It carries out the reaction 5-(2-hydroxyethyl)-4-methylthiazole + ATP = 4-methyl-5-(2-phosphooxyethyl)-thiazole + ADP + H(+). The protein operates within cofactor biosynthesis; thiamine diphosphate biosynthesis; 4-methyl-5-(2-phosphoethyl)-thiazole from 5-(2-hydroxyethyl)-4-methylthiazole: step 1/1. In terms of biological role, catalyzes the phosphorylation of the hydroxyl group of 4-methyl-5-beta-hydroxyethylthiazole (THZ). This chain is Hydroxyethylthiazole kinase 2, found in Clostridium botulinum (strain Langeland / NCTC 10281 / Type F).